The chain runs to 956 residues: Glycine dehydrogenase (decarboxylating) 2 (956 aa).

Lys706 carries the post-translational modification N6-(pyridoxal phosphate)lysine.

The protein belongs to the GcvP family. In terms of assembly, the glycine cleavage system is composed of four proteins: P, T, L and H. Requires pyridoxal 5'-phosphate as cofactor.

The catalysed reaction is N(6)-[(R)-lipoyl]-L-lysyl-[glycine-cleavage complex H protein] + glycine + H(+) = N(6)-[(R)-S(8)-aminomethyldihydrolipoyl]-L-lysyl-[glycine-cleavage complex H protein] + CO2. Functionally, the glycine cleavage system catalyzes the degradation of glycine. The P protein binds the alpha-amino group of glycine through its pyridoxal phosphate cofactor; CO(2) is released and the remaining methylamine moiety is then transferred to the lipoamide cofactor of the H protein. The polypeptide is Glycine dehydrogenase (decarboxylating) 2 (Colwellia psychrerythraea (strain 34H / ATCC BAA-681) (Vibrio psychroerythus)).